Here is a 160-residue protein sequence, read N- to C-terminus: Non-secretory ribonuclease (160 aa).

The signal sequence occupies residues 1–27; that stretch reads MVPKLFTSQICLLLLLGLMGVEGSLHA. Residue Trp34 is glycosylated (C-linked (Man) tryptophan). His42 acts as the Proton acceptor in catalysis. N-linked (GlcNAc...) asparagine glycosylation is present at Asn44. Disulfide bonds link Cys50–Cys110, Cys64–Cys122, Cys82–Cys137, and Cys89–Cys98. Tyr60 carries the post-translational modification 3'-nitrotyrosine. 65 to 69 lines the substrate pocket; that stretch reads KNQNT. N-linked (GlcNAc...) asparagine glycosylation is found at Asn92, Asn111, and Asn138. Residue His155 is the Proton donor of the active site.

Belongs to the pancreatic ribonuclease family. Interacts with and forms a tight 1:1 complex with RNH1. Dimerization of two such complexes may occur.

It localises to the lysosome. The protein resides in the cytoplasmic granule. It carries out the reaction an [RNA] containing cytidine + H2O = an [RNA]-3'-cytidine-3'-phosphate + a 5'-hydroxy-ribonucleotide-3'-[RNA].. The enzyme catalyses an [RNA] containing uridine + H2O = an [RNA]-3'-uridine-3'-phosphate + a 5'-hydroxy-ribonucleotide-3'-[RNA].. Its function is as follows. This is a non-secretory ribonuclease. It is a pyrimidine specific nuclease with a slight preference for U. Cytotoxin and helminthotoxin. Possesses a wide variety of biological activities. In Macaca fascicularis (Crab-eating macaque), this protein is Non-secretory ribonuclease (RNASE2).